A 185-amino-acid chain; its full sequence is Elongation factor P (185 aa).

It belongs to the elongation factor P family.

It is found in the cytoplasm. The protein operates within protein biosynthesis; polypeptide chain elongation. Functionally, involved in peptide bond synthesis. Stimulates efficient translation and peptide-bond synthesis on native or reconstituted 70S ribosomes in vitro. Probably functions indirectly by altering the affinity of the ribosome for aminoacyl-tRNA, thus increasing their reactivity as acceptors for peptidyl transferase. In Listeria innocua serovar 6a (strain ATCC BAA-680 / CLIP 11262), this protein is Elongation factor P.